Consider the following 88-residue polypeptide: Small ribosomal subunit protein bS20 (88 aa).

The protein belongs to the bacterial ribosomal protein bS20 family.

Binds directly to 16S ribosomal RNA. This is Small ribosomal subunit protein bS20 from Brucella abortus (strain S19).